We begin with the raw amino-acid sequence, 388 residues long: Protein FAM199X (388 aa).

Positions 288 to 312 are enriched in low complexity; that stretch reads SMVSSASSSGSSVGNSASNSSANMS. Residues 288–358 are disordered; the sequence is SMVSSASSSG…QLKEQRQARK (71 aa). Phosphoserine is present on residues serine 316 and serine 321. Basic residues predominate over residues 330–349; the sequence is DSKKRSKQRKLQQKAFRKRQ.

The protein belongs to the FAM199 family.

The protein is Protein FAM199X (Fam199x) of Mus musculus (Mouse).